The chain runs to 248 residues: Probable transcriptional regulatory protein Fphi_1565 (248 aa).

The protein belongs to the TACO1 family.

It localises to the cytoplasm. This is Probable transcriptional regulatory protein Fphi_1565 from Francisella philomiragia subsp. philomiragia (strain ATCC 25017 / CCUG 19701 / FSC 153 / O#319-036).